The sequence spans 237 residues: Uridylate kinase (237 aa).

Position 9 to 12 (9 to 12) interacts with ATP; sequence KLSG. G51 contributes to the UMP binding site. G52 and R56 together coordinate ATP. UMP-binding positions include D71 and 132-139; that span reads CGNPFFTT. Positions 159, 165, and 168 each coordinate ATP.

Belongs to the UMP kinase family. Homohexamer.

It is found in the cytoplasm. It catalyses the reaction UMP + ATP = UDP + ADP. Its pathway is pyrimidine metabolism; CTP biosynthesis via de novo pathway; UDP from UMP (UMPK route): step 1/1. Inhibited by UTP. In terms of biological role, catalyzes the reversible phosphorylation of UMP to UDP. In Prochlorococcus marinus (strain SARG / CCMP1375 / SS120), this protein is Uridylate kinase.